A 546-amino-acid chain; its full sequence is Probable lysosomal cobalamin transporter (546 aa).

4 consecutive transmembrane segments (helical) span residues 8-28, 48-68, 102-122, and 141-161; these read LAQG…FSWF, IIAL…IFLV, ILYA…YFFF, and YSIG…FAPL. N167 carries an N-linked (GlcNAc...) asparagine glycan. A run of 4 helical transmembrane segments spans residues 189–209, 304–324, 352–372, and 407–427; these read TALS…MITY, MVFG…LFIT, IIMV…LLVV, and ALLF…VMLF. N-linked (GlcNAc...) asparagine glycosylation is found at N444, N452, and N459. Residues 495-515 traverse the membrane as a helical segment; that stretch reads VWFFGACYYWGTWLFLVVFMT.

This sequence belongs to the LIMR family. LMBRD1 subfamily.

It is found in the lysosome membrane. Its function is as follows. Probable lysosomal cobalamin transporter. Required to export cobalamin from lysosomes allowing its conversion to cofactors. This Nematostella vectensis (Starlet sea anemone) protein is Probable lysosomal cobalamin transporter.